Consider the following 256-residue polypeptide: MKIITCYKCVPDEQDIAVNNADGSLDFSKADAKISQYDLNAIEAACQLKQQAAEAQVTALSVGGKALTNAKGRKDVLSRGPDELIVVIDDQFEQALPQQTATALAAAAQKAGFDLILCGDGSSDLYAQQVGLLVGEILDIPVVNGVSKIISLTTDTLTVERELEDETETLSIPLPAVVAVSTDINSPQIPSMKAILGAAKKPVQVWSAADIGFNAVEAWSEQQVAAPKQRERQRIVIEGDGEEQIAAFAENLRKVI.

Belongs to the ETF beta-subunit/FixA family. Heterodimer of FixA and FixB.

Its pathway is amine and polyamine metabolism; carnitine metabolism. Required for anaerobic carnitine reduction. May bring reductant to CaiA. This Escherichia fergusonii (strain ATCC 35469 / DSM 13698 / CCUG 18766 / IAM 14443 / JCM 21226 / LMG 7866 / NBRC 102419 / NCTC 12128 / CDC 0568-73) protein is Protein FixA.